The chain runs to 203 residues: ATP-dependent Clp protease proteolytic subunit (203 aa).

Catalysis depends on S107, which acts as the Nucleophile. Residue H132 is part of the active site.

This sequence belongs to the peptidase S14 family. In terms of assembly, fourteen ClpP subunits assemble into 2 heptameric rings which stack back to back to give a disk-like structure with a central cavity, resembling the structure of eukaryotic proteasomes.

The protein resides in the cytoplasm. It catalyses the reaction Hydrolysis of proteins to small peptides in the presence of ATP and magnesium. alpha-casein is the usual test substrate. In the absence of ATP, only oligopeptides shorter than five residues are hydrolyzed (such as succinyl-Leu-Tyr-|-NHMec, and Leu-Tyr-Leu-|-Tyr-Trp, in which cleavage of the -Tyr-|-Leu- and -Tyr-|-Trp bonds also occurs).. Functionally, cleaves peptides in various proteins in a process that requires ATP hydrolysis. Has a chymotrypsin-like activity. Plays a major role in the degradation of misfolded proteins. The chain is ATP-dependent Clp protease proteolytic subunit from Shewanella woodyi (strain ATCC 51908 / MS32).